The sequence spans 166 residues: Urease accessory protein UreE (166 aa).

A disordered region spans residues 132–156 (FQPEHGAYGGGHHHSRHGDEDFNYP).

This sequence belongs to the UreE family.

Its subcellular location is the cytoplasm. In terms of biological role, involved in urease metallocenter assembly. Binds nickel. Probably functions as a nickel donor during metallocenter assembly. This chain is Urease accessory protein UreE, found in Pseudomonas fluorescens (strain ATCC BAA-477 / NRRL B-23932 / Pf-5).